Consider the following 944-residue polypeptide: Isoleucine--tRNA ligase (944 aa).

The 'HIGH' region motif lies at 58–68 (PYANGSIHIGH). E563 is an L-isoleucyl-5'-AMP binding site. Positions 604–608 (KMSKS) match the 'KMSKS' region motif. K607 serves as a coordination point for ATP. 4 residues coordinate Zn(2+): C907, C910, C927, and C930.

This sequence belongs to the class-I aminoacyl-tRNA synthetase family. IleS type 1 subfamily. As to quaternary structure, monomer. It depends on Zn(2+) as a cofactor.

It localises to the cytoplasm. It carries out the reaction tRNA(Ile) + L-isoleucine + ATP = L-isoleucyl-tRNA(Ile) + AMP + diphosphate. Its function is as follows. Catalyzes the attachment of isoleucine to tRNA(Ile). As IleRS can inadvertently accommodate and process structurally similar amino acids such as valine, to avoid such errors it has two additional distinct tRNA(Ile)-dependent editing activities. One activity is designated as 'pretransfer' editing and involves the hydrolysis of activated Val-AMP. The other activity is designated 'posttransfer' editing and involves deacylation of mischarged Val-tRNA(Ile). This Salmonella paratyphi A (strain ATCC 9150 / SARB42) protein is Isoleucine--tRNA ligase.